The primary structure comprises 282 residues: Deoxyribonuclease-1 (282 aa).

The signal sequence occupies residues 1-20 (MARLVLELLAAALLLRVAAT). The N-linked (GlcNAc...) asparagine glycan is linked to Asn38. Residue Glu98 is part of the active site. Cysteines 121 and 124 form a disulfide. His154 is an active-site residue. A disulfide bridge connects residues Cys193 and Cys229.

This sequence belongs to the DNase I family. The cofactor is Ca(2+). It depends on Mg(2+) as a cofactor. Post-translationally, N-glycosylated.

The protein resides in the secreted. It is found in the zymogen granule. The protein localises to the nucleus envelope. The enzyme catalyses Endonucleolytic cleavage to 5'-phosphodinucleotide and 5'-phosphooligonucleotide end-products.. Serum endocuclease secreted into body fluids by a wide variety of exocrine and endocrine organs. Expressed by non-hematopoietic tissues and preferentially cleaves protein-free DNA. Among other functions, seems to be involved in cell death by apoptosis. Binds specifically to G-actin and blocks actin polymerization. The protein is Deoxyribonuclease-1 (DNASE1) of Gallus gallus (Chicken).